A 747-amino-acid chain; its full sequence is DNA topoisomerase 4 subunit A (747 aa).

The Topo IIA-type catalytic domain occupies 35–498 (LPFIGDGLKP…EAKMISESDM (464 aa)). Tyrosine 124 (O-(5'-phospho-DNA)-tyrosine intermediate) is an active-site residue.

It belongs to the type II topoisomerase GyrA/ParC subunit family. ParC type 1 subfamily. In terms of assembly, heterotetramer composed of ParC and ParE.

It localises to the cell membrane. The catalysed reaction is ATP-dependent breakage, passage and rejoining of double-stranded DNA.. Topoisomerase IV is essential for chromosome segregation. It relaxes supercoiled DNA. Performs the decatenation events required during the replication of a circular DNA molecule. The polypeptide is DNA topoisomerase 4 subunit A (Haemophilus influenzae (strain ATCC 51907 / DSM 11121 / KW20 / Rd)).